Consider the following 321-residue polypeptide: Porphobilinogen deaminase (321 aa).

Residue Cys-246 is modified to S-(dipyrrolylmethanemethyl)cysteine.

This sequence belongs to the HMBS family. Monomer. It depends on dipyrromethane as a cofactor.

It carries out the reaction 4 porphobilinogen + H2O = hydroxymethylbilane + 4 NH4(+). It participates in porphyrin-containing compound metabolism; protoporphyrin-IX biosynthesis; coproporphyrinogen-III from 5-aminolevulinate: step 2/4. In terms of biological role, tetrapolymerization of the monopyrrole PBG into the hydroxymethylbilane pre-uroporphyrinogen in several discrete steps. The chain is Porphobilinogen deaminase from Helicobacter hepaticus (strain ATCC 51449 / 3B1).